The primary structure comprises 282 residues: Protoheme IX farnesyltransferase (282 aa).

Helical transmembrane passes span 13–33, 36–56, 74–96, 101–120, 129–149, 156–176, 207–227, 232–252, and 261–281; these read VAGM…GAAG, MVTS…FNQI, ASGR…PALI, AGGV…YNGV, AFSL…GWLA, SPEI…HFWL, LWYA…FIAE, IAVC…LASP, and VSML…SGII.

The protein belongs to the UbiA prenyltransferase family. Protoheme IX farnesyltransferase subfamily.

The protein resides in the cell inner membrane. It catalyses the reaction heme b + (2E,6E)-farnesyl diphosphate + H2O = Fe(II)-heme o + diphosphate. It functions in the pathway porphyrin-containing compound metabolism; heme O biosynthesis; heme O from protoheme: step 1/1. Functionally, converts heme B (protoheme IX) to heme O by substitution of the vinyl group on carbon 2 of heme B porphyrin ring with a hydroxyethyl farnesyl side group. In Oleidesulfovibrio alaskensis (strain ATCC BAA-1058 / DSM 17464 / G20) (Desulfovibrio alaskensis), this protein is Protoheme IX farnesyltransferase.